The following is a 78-amino-acid chain: NAD(P)H-quinone oxidoreductase subunit L (78 aa).

2 helical membrane passes run 10–30 (IILIIYAALAGAYFLVMPAIV) and 47–67 (VFMYFLMFLFFPGMLVLSPFL).

The protein belongs to the complex I NdhL subunit family. In terms of assembly, NDH-1 can be composed of about 15 different subunits; different subcomplexes with different compositions have been identified which probably have different functions.

It is found in the cellular thylakoid membrane. The catalysed reaction is a plastoquinone + NADH + (n+1) H(+)(in) = a plastoquinol + NAD(+) + n H(+)(out). It carries out the reaction a plastoquinone + NADPH + (n+1) H(+)(in) = a plastoquinol + NADP(+) + n H(+)(out). In terms of biological role, NDH-1 shuttles electrons from an unknown electron donor, via FMN and iron-sulfur (Fe-S) centers, to quinones in the respiratory and/or the photosynthetic chain. The immediate electron acceptor for the enzyme in this species is believed to be plastoquinone. Couples the redox reaction to proton translocation, and thus conserves the redox energy in a proton gradient. Cyanobacterial NDH-1 also plays a role in inorganic carbon-concentration. The polypeptide is NAD(P)H-quinone oxidoreductase subunit L (Trichodesmium erythraeum (strain IMS101)).